Consider the following 665-residue polypeptide: Filensin (665 aa).

Residues Met1–Ser40 are head. Position 5 is a phosphoserine (Ser5). Residues Ser40 to Leu320 form the IF rod domain. Residues Leu41–Phe75 are coil 1A. Ala42 is modified (N-acetylalanine). The tract at residues Gln76–Pro84 is linker 1. The coil 1B stretch occupies residues Glu85 to Gln184. A linker 12 region spans residues Thr185 to Ser201. The interval Ile202 to Leu320 is coil 2. The interval Thr321–Ser665 is tail. Ser341 and Ser420 each carry phosphoserine. Disordered regions lie at residues Ser410–Lys439 and Tyr506–Pro614. Residue Gly434 is the site of N-myristoyl glycine attachment. Ser513 is modified (phosphoserine). Residues Pro556 to Arg571 are compositionally biased toward basic and acidic residues. The residue at position 665 (Ser665) is a Phosphoserine.

It belongs to the intermediate filament family. In terms of assembly, part of a complex required for lens intermediate filament formation composed of BFSP1, BFSP2 and CRYAA. Identified in a complex that contains VIM, EZR, AHNAK, BFSP1, BFSP2, ANK2, PLEC, PRX and spectrin. Found in a complex composed of PPL (via C-terminal linker domain), BFSP1 and BFSP2 in the retinal lens. Within the complex interacts with BFSP2. Interacts (via C-terminus) with MIP (via C-terminus) in aged lens fiber cells. In terms of processing, proteolytically cleaved during lens cell fiber differentiation with increased fragmentation as fiber cell age increases. Post-translationally, myristoylated at Gly-434 following proteolytic cleavage at Asp-433. Acetylated at Ala-42 following proteolytic cleavage at Leu-41. In terms of tissue distribution, expressed in the cortex and nucleus of the retina lens (at protein level).

It localises to the cell membrane. The protein localises to the cytoplasm. It is found in the cytoskeleton. The protein resides in the cell cortex. Functionally, required for the correct formation of lens intermediate filaments as part of a complex composed of BFSP1, BFSP2 and CRYAA. Involved in altering the calcium regulation of MIP water permeability. The protein is Filensin (BFSP1) of Homo sapiens (Human).